The chain runs to 328 residues: Beta-ketoacyl-[acyl-carrier-protein] synthase III 2 (328 aa).

Active-site residues include cysteine 113 and histidine 255. Positions 256–260 are ACP-binding; sequence QANAR. The active site involves asparagine 285.

The protein belongs to the thiolase-like superfamily. FabH family. Homodimer.

Its subcellular location is the cytoplasm. The enzyme catalyses malonyl-[ACP] + acetyl-CoA + H(+) = 3-oxobutanoyl-[ACP] + CO2 + CoA. It participates in lipid metabolism; fatty acid biosynthesis. Catalyzes the condensation reaction of fatty acid synthesis by the addition to an acyl acceptor of two carbons from malonyl-ACP. Catalyzes the first condensation reaction which initiates fatty acid synthesis and may therefore play a role in governing the total rate of fatty acid production. Possesses both acetoacetyl-ACP synthase and acetyl transacylase activities. Its substrate specificity determines the biosynthesis of branched-chain and/or straight-chain of fatty acids. The polypeptide is Beta-ketoacyl-[acyl-carrier-protein] synthase III 2 (Lactiplantibacillus plantarum (strain ATCC BAA-793 / NCIMB 8826 / WCFS1) (Lactobacillus plantarum)).